The sequence spans 183 residues: Inner membrane protein YgjV (183 aa).

Residues 1–2 lie on the Periplasmic side of the membrane; sequence MT. Residues 3-23 traverse the membrane as a helical segment; the sequence is AYWLAQGVGVIAFLIGITTFF. The Cytoplasmic segment spans residues 24 to 38; sequence NRDERRFKKQLSVYS. A helical membrane pass occupies residues 39-59; that stretch reads AVIGVHFFLLGTYPAGASAIL. Topologically, residues 60–71 are periplasmic; sequence NAIRTLITLRTR. The next 2 membrane-spanning stretches (helical) occupy residues 72–92 and 93–113; these read SLWV…AKFH and HPVE…LFCC. Residues 114-133 lie on the Periplasmic side of the membrane; that stretch reads KGLTMRCVMWFSTCCWVIHN. The helical transmembrane segment at 134 to 154 threads the bilayer; it reads FWAGSIGGTMIEGSFLLMNGL. Over 155 to 183 the chain is Cytoplasmic; sequence NIIRFWRMQKRGIDPFKVEKTPSAVDERG.

It localises to the cell inner membrane. This Escherichia coli (strain K12) protein is Inner membrane protein YgjV (ygjV).